The sequence spans 351 residues: UDP-3-O-acylglucosamine N-acyltransferase (351 aa).

The active-site Proton acceptor is the His-240.

This sequence belongs to the transferase hexapeptide repeat family. LpxD subfamily. In terms of assembly, homotrimer.

It carries out the reaction a UDP-3-O-[(3R)-3-hydroxyacyl]-alpha-D-glucosamine + a (3R)-hydroxyacyl-[ACP] = a UDP-2-N,3-O-bis[(3R)-3-hydroxyacyl]-alpha-D-glucosamine + holo-[ACP] + H(+). It participates in bacterial outer membrane biogenesis; LPS lipid A biosynthesis. In terms of biological role, catalyzes the N-acylation of UDP-3-O-acylglucosamine using 3-hydroxyacyl-ACP as the acyl donor. Is involved in the biosynthesis of lipid A, a phosphorylated glycolipid that anchors the lipopolysaccharide to the outer membrane of the cell. The protein is UDP-3-O-acylglucosamine N-acyltransferase of Pseudomonas fluorescens (strain Pf0-1).